Here is a 384-residue protein sequence, read N- to C-terminus: Spermidine/putrescine import ATP-binding protein PotA (384 aa).

The 233-residue stretch at 6 to 238 folds into the ABC transporter domain; it reads ITFNNVSKTF…PINHFVANFI (233 aa). 40–47 serves as a coordination point for ATP; the sequence is GASGSGKS.

It belongs to the ABC transporter superfamily. Spermidine/putrescine importer (TC 3.A.1.11.1) family. As to quaternary structure, the complex is composed of two ATP-binding proteins (PotA), two transmembrane proteins (PotB and PotC) and a solute-binding protein (PotD).

The protein localises to the cell membrane. It catalyses the reaction ATP + H2O + polyamine-[polyamine-binding protein]Side 1 = ADP + phosphate + polyamineSide 2 + [polyamine-binding protein]Side 1.. Its function is as follows. Part of the ABC transporter complex PotABCD involved in spermidine/putrescine import. Responsible for energy coupling to the transport system. This is Spermidine/putrescine import ATP-binding protein PotA from Streptococcus pyogenes serotype M18 (strain MGAS8232).